We begin with the raw amino-acid sequence, 689 residues long: DNA ligase (689 aa).

Residues 40 to 44, 89 to 90, and E121 each bind NAD(+); these read DSEYD and SL. K123 acts as the N6-AMP-lysine intermediate in catalysis. NAD(+)-binding residues include R144, E179, K295, and K319. Zn(2+)-binding residues include C413, C416, C431, and C437. One can recognise a BRCT domain in the interval 610–689; sequence REQSSLTDKI…EEWLTLIKNV (80 aa).

Belongs to the NAD-dependent DNA ligase family. LigA subfamily. The cofactor is Mg(2+). Requires Mn(2+) as cofactor.

It carries out the reaction NAD(+) + (deoxyribonucleotide)n-3'-hydroxyl + 5'-phospho-(deoxyribonucleotide)m = (deoxyribonucleotide)n+m + AMP + beta-nicotinamide D-nucleotide.. DNA ligase that catalyzes the formation of phosphodiester linkages between 5'-phosphoryl and 3'-hydroxyl groups in double-stranded DNA using NAD as a coenzyme and as the energy source for the reaction. It is essential for DNA replication and repair of damaged DNA. The polypeptide is DNA ligase (Rickettsia massiliae (strain Mtu5)).